Consider the following 142-residue polypeptide: Large ribosomal subunit protein uL13 (142 aa).

It belongs to the universal ribosomal protein uL13 family. As to quaternary structure, part of the 50S ribosomal subunit.

Its function is as follows. This protein is one of the early assembly proteins of the 50S ribosomal subunit, although it is not seen to bind rRNA by itself. It is important during the early stages of 50S assembly. This is Large ribosomal subunit protein uL13 from Shewanella amazonensis (strain ATCC BAA-1098 / SB2B).